The chain runs to 65 residues: Cytochrome b-c1 complex subunit 9, mitochondrial (65 aa).

The helical transmembrane segment at 14–34 (IYVATIFGGAFAFQGFFDVAV) threads the bilayer.

The protein belongs to the UQCR10/QCR9 family. Component of the ubiquinol-cytochrome c oxidoreductase (cytochrome b-c1 complex, complex III, CIII), a multisubunit enzyme composed of 10 subunits. The complex is composed of 3 respiratory subunits cytochrome b (COB), cytochrome c1 (CYT1) and Rieske protein (RIP1), 2 core protein subunits COR1 and QCR2, and 5 low-molecular weight protein subunits QCR6, QCR7, QCR8, QCR9 and QCR10. The complex exists as an obligatory dimer and forms supercomplexes (SCs) in the inner mitochondrial membrane with a monomer or a dimer of cytochrome c oxidase (complex IV, CIV), resulting in 2 different assemblies (supercomplexes III(2)IV and III(2)IV(2)).

The protein resides in the membrane. It is found in the mitochondrion inner membrane. In terms of biological role, component of the ubiquinol-cytochrome c oxidoreductase, a multisubunit transmembrane complex that is part of the mitochondrial electron transport chain which drives oxidative phosphorylation. The complex plays an important role in the uptake of multiple carbon sources present in different host niches. The polypeptide is Cytochrome b-c1 complex subunit 9, mitochondrial (Candida albicans (strain SC5314 / ATCC MYA-2876) (Yeast)).